A 337-amino-acid polypeptide reads, in one-letter code: Acetyl-coenzyme A synthetase (337 aa).

CoA-binding positions include 131-134 (RGGR), T249, and N273. 325 to 327 (GEP) is a binding site for ATP.

Belongs to the ATP-dependent AMP-binding enzyme family. The cofactor is Mg(2+). In terms of processing, acetylated. Deacetylation by the SIR2-homolog deacetylase activates the enzyme.

The catalysed reaction is acetate + ATP + CoA = acetyl-CoA + AMP + diphosphate. In terms of biological role, catalyzes the conversion of acetate into acetyl-CoA (AcCoA), an essential intermediate at the junction of anabolic and catabolic pathways. AcsA undergoes a two-step reaction. In the first half reaction, AcsA combines acetate with ATP to form acetyl-adenylate (AcAMP) intermediate. In the second half reaction, it can then transfer the acetyl group from AcAMP to the sulfhydryl group of CoA, forming the product AcCoA. This Nostoc linckia protein is Acetyl-coenzyme A synthetase (acsA).